Consider the following 399-residue polypeptide: S-adenosylmethionine synthase (399 aa).

His-17 is a binding site for ATP. Residue Asp-19 coordinates Mg(2+). Glu-45 lines the K(+) pocket. The L-methionine site is built by Glu-58 and Gln-101. The segment at 101–111 is flexible loop; that stretch reads QSADIAMGVDQ. Residues 177–179, 244–245, Asp-253, 259–260, Ala-276, and Lys-280 each bind ATP; these read DGK, RF, and RK. Asp-253 provides a ligand contact to L-methionine. Lys-284 lines the L-methionine pocket.

It belongs to the AdoMet synthase family. As to quaternary structure, homotetramer; dimer of dimers. Requires Mg(2+) as cofactor. The cofactor is K(+).

The protein localises to the cytoplasm. It carries out the reaction L-methionine + ATP + H2O = S-adenosyl-L-methionine + phosphate + diphosphate. The protein operates within amino-acid biosynthesis; S-adenosyl-L-methionine biosynthesis; S-adenosyl-L-methionine from L-methionine: step 1/1. In terms of biological role, catalyzes the formation of S-adenosylmethionine (AdoMet) from methionine and ATP. The overall synthetic reaction is composed of two sequential steps, AdoMet formation and the subsequent tripolyphosphate hydrolysis which occurs prior to release of AdoMet from the enzyme. The sequence is that of S-adenosylmethionine synthase from Bacillus mycoides (strain KBAB4) (Bacillus weihenstephanensis).